The sequence spans 309 residues: Aspartate carbamoyltransferase catalytic subunit (309 aa).

R49 and T50 together coordinate carbamoyl phosphate. K77 serves as a coordination point for L-aspartate. The carbamoyl phosphate site is built by R99, H127, and Q130. R160 and R211 together coordinate L-aspartate. Positions 252 and 253 each coordinate carbamoyl phosphate.

The protein belongs to the aspartate/ornithine carbamoyltransferase superfamily. ATCase family. In terms of assembly, heterododecamer (2C3:3R2) of six catalytic PyrB chains organized as two trimers (C3), and six regulatory PyrI chains organized as three dimers (R2).

The enzyme catalyses carbamoyl phosphate + L-aspartate = N-carbamoyl-L-aspartate + phosphate + H(+). It functions in the pathway pyrimidine metabolism; UMP biosynthesis via de novo pathway; (S)-dihydroorotate from bicarbonate: step 2/3. In terms of biological role, catalyzes the condensation of carbamoyl phosphate and aspartate to form carbamoyl aspartate and inorganic phosphate, the committed step in the de novo pyrimidine nucleotide biosynthesis pathway. The chain is Aspartate carbamoyltransferase catalytic subunit from Geobacillus sp. (strain WCH70).